The chain runs to 30 residues: Hainantoxin F7-28.42 (30 aa).

As to expression, expressed by the venom gland.

It is found in the secreted. The protein is Hainantoxin F7-28.42 of Cyriopagopus hainanus (Chinese bird spider).